The chain runs to 65 residues: Small ribosomal subunit protein bS21 (65 aa).

Belongs to the bacterial ribosomal protein bS21 family.

The protein is Small ribosomal subunit protein bS21 of Thermodesulfovibrio yellowstonii (strain ATCC 51303 / DSM 11347 / YP87).